The following is a 126-amino-acid chain: Glycine cleavage system H protein (126 aa).

The region spanning 22 to 104 (VAYVGITDYA…YGEGWLIKMK (83 aa)) is the Lipoyl-binding domain. K63 carries the N6-lipoyllysine modification.

Belongs to the GcvH family. The glycine cleavage system is composed of four proteins: P, T, L and H. It depends on (R)-lipoate as a cofactor.

Functionally, the glycine cleavage system catalyzes the degradation of glycine. The H protein shuttles the methylamine group of glycine from the P protein to the T protein. The chain is Glycine cleavage system H protein from Bacteroides fragilis (strain ATCC 25285 / DSM 2151 / CCUG 4856 / JCM 11019 / LMG 10263 / NCTC 9343 / Onslow / VPI 2553 / EN-2).